An 887-amino-acid polypeptide reads, in one-letter code: Phosphatidylinositol 3-kinase catalytic subunit type 3 (887 aa).

The region spanning 35-184 is the C2 PI3K-type domain; sequence YKAVLEDPML…LAKLTKAHRQ (150 aa). The segment at 149 to 170 is disordered; the sequence is VEADGSEPTKTPGRTSSTLSED. The span at 156–170 shows a compositional bias: polar residues; the sequence is PTKTPGRTSSTLSED. T163 is modified (phosphothreonine; by AMPK). Residue S165 is modified to Phosphoserine; by AMPK. Phosphoserine is present on residues S244, S261, and S282. The PIK helical domain occupies 283–520; that stretch reads DHDLKPNAAT…PKTHEMYLNV (238 aa). Residues 447–467 are disordered; it reads TSPLPSVSSPPPASKTKEVPD. The region spanning 605–871 is the PI3K/PI4K catalytic domain; the sequence is IPETATLFKS…LIDESVHALF (267 aa). Positions 611 to 617 are G-loop; it reads LFKSALM. Positions 740 to 748 are catalytic loop; that stretch reads GVGDRHLDN. The interval 759–780 is activation loop; sequence HIDFGYILGRDPKPLPPPMKLN.

Belongs to the PI3/PI4-kinase family. Component of the PI3K (PI3KC3/PI3K-III/class III phosphatidylinositol 3-kinase) complex the core of which is composed of the catalytic subunit PIK3C3, the regulatory subunit PIK3R4 and BECN1 associating with additional regulatory/auxiliary subunits to form alternative complex forms. Alternative complex forms containing a fourth regulatory subunit in a mutually exclusive manner are: the PI3K complex I (PI3KC3-C1) containing ATG14, and the PI3K complex II (PI3KC3-C2) containing UVRAG. PI3KC3-C1 displays a V-shaped architecture with PIK3R4 serving as a bridge between PIK3C3 and the ATG14:BECN1 subcomplex. Both, PI3KC3-C1 and PI3KC3-C2, can associate with further regulatory subunits such as RUBCN, SH3GLB1/Bif-1 and AMBRA1. PI3KC3-C1 probably associates with PIK3CB. Interacts with RAB7A in the presence of PIK3R4. Interacts with AMBRA1. Interacts with BECN1P1/BECN2. Interacts with SLAMF1. May be a component of a complex composed of RAB5A (in GDP-bound form), DYN2 and PIK3C3. Interacts with NCKAP1L. Interacts with ATG14; this interaction is increased in the absence of TMEM39A. Interacts with STEEP1; the interaction is STING1-dependent and required for trafficking of STING1 from the endoplasmic reticulum. Interacts with YWHAG. Interacts with ARMC3. It depends on Mn(2+) as a cofactor. Post-translationally, ubiquitinated via 'Lys-29'- and 'Lys-48'-linked ubiquitination by UBE3C, promoting its degradation. Deubiquitination by ZRANB1/TRABID promotes its stabilization, leading to autophagosome maturation. Ubiquitously expressed, with a highest expression in skeletal muscle.

The protein resides in the midbody. It is found in the late endosome. Its subcellular location is the cytoplasmic vesicle. It localises to the autophagosome. The enzyme catalyses a 1,2-diacyl-sn-glycero-3-phospho-(1D-myo-inositol) + ATP = a 1,2-diacyl-sn-glycero-3-phospho-(1D-myo-inositol-3-phosphate) + ADP + H(+). Catalytic subunit of the PI3K complex that mediates formation of phosphatidylinositol 3-phosphate; different complex forms are believed to play a role in multiple membrane trafficking pathways: PI3KC3-C1 is involved in initiation of autophagosomes and PI3KC3-C2 in maturation of autophagosomes and endocytosis. As part of PI3KC3-C1, promotes endoplasmic reticulum membrane curvature formation prior to vesicle budding. Involved in regulation of degradative endocytic trafficking and required for the abscission step in cytokinesis, probably in the context of PI3KC3-C2. Involved in the transport of lysosomal enzyme precursors to lysosomes. Required for transport from early to late endosomes. Its function is as follows. (Microbial infection) Kinase activity is required for SARS coronavirus-2/SARS-CoV-2 replication. The sequence is that of Phosphatidylinositol 3-kinase catalytic subunit type 3 from Homo sapiens (Human).